Here is a 271-residue protein sequence, read N- to C-terminus: tRNA pseudouridine synthase A (271 aa).

Catalysis depends on D56, which acts as the Nucleophile. Y120 is a substrate binding site.

This sequence belongs to the tRNA pseudouridine synthase TruA family. In terms of assembly, homodimer.

It carries out the reaction uridine(38/39/40) in tRNA = pseudouridine(38/39/40) in tRNA. Functionally, formation of pseudouridine at positions 38, 39 and 40 in the anticodon stem and loop of transfer RNAs. The chain is tRNA pseudouridine synthase A from Janthinobacterium sp. (strain Marseille) (Minibacterium massiliensis).